Here is a 330-residue protein sequence, read N- to C-terminus: Ketol-acid reductoisomerase (NADP(+)) (330 aa).

One can recognise a KARI N-terminal Rossmann domain in the interval 2–181 (AKVYYDNDVN…GATRAGVIET (180 aa)). NADP(+) is bound by residues 25–28 (YGSQ), arginine 48, serine 52, and 82–85 (DEVQ). The active site involves histidine 107. Glycine 133 is a binding site for NADP(+). In terms of domain architecture, KARI C-terminal knotted spans 182 to 327 (TFKEETETDL…ADLRMMMPFI (146 aa)). The Mg(2+) site is built by aspartate 190, glutamate 194, glutamate 226, and glutamate 230. Serine 251 contributes to the substrate binding site.

Belongs to the ketol-acid reductoisomerase family. It depends on Mg(2+) as a cofactor.

It carries out the reaction (2R)-2,3-dihydroxy-3-methylbutanoate + NADP(+) = (2S)-2-acetolactate + NADPH + H(+). It catalyses the reaction (2R,3R)-2,3-dihydroxy-3-methylpentanoate + NADP(+) = (S)-2-ethyl-2-hydroxy-3-oxobutanoate + NADPH + H(+). Its pathway is amino-acid biosynthesis; L-isoleucine biosynthesis; L-isoleucine from 2-oxobutanoate: step 2/4. It participates in amino-acid biosynthesis; L-valine biosynthesis; L-valine from pyruvate: step 2/4. In terms of biological role, involved in the biosynthesis of branched-chain amino acids (BCAA). Catalyzes an alkyl-migration followed by a ketol-acid reduction of (S)-2-acetolactate (S2AL) to yield (R)-2,3-dihydroxy-isovalerate. In the isomerase reaction, S2AL is rearranged via a Mg-dependent methyl migration to produce 3-hydroxy-3-methyl-2-ketobutyrate (HMKB). In the reductase reaction, this 2-ketoacid undergoes a metal-dependent reduction by NADPH to yield (R)-2,3-dihydroxy-isovalerate. This Macrococcus caseolyticus (strain JCSC5402) (Macrococcoides caseolyticum) protein is Ketol-acid reductoisomerase (NADP(+)).